A 340-amino-acid chain; its full sequence is tRNA N6-adenosine threonylcarbamoyltransferase (340 aa).

Fe cation is bound by residues His-111 and His-115. Residues 134 to 138, Asp-167, Gly-180, and Asn-272 each bind substrate; that span reads LVSGG. Residue Asp-300 participates in Fe cation binding.

It belongs to the KAE1 / TsaD family. It depends on Fe(2+) as a cofactor.

The protein resides in the cytoplasm. It carries out the reaction L-threonylcarbamoyladenylate + adenosine(37) in tRNA = N(6)-L-threonylcarbamoyladenosine(37) in tRNA + AMP + H(+). In terms of biological role, required for the formation of a threonylcarbamoyl group on adenosine at position 37 (t(6)A37) in tRNAs that read codons beginning with adenine. Is involved in the transfer of the threonylcarbamoyl moiety of threonylcarbamoyl-AMP (TC-AMP) to the N6 group of A37, together with TsaE and TsaB. TsaD likely plays a direct catalytic role in this reaction. The protein is tRNA N6-adenosine threonylcarbamoyltransferase of Proteus mirabilis (strain HI4320).